The primary structure comprises 309 residues: Homoserine kinase (309 aa).

91-101 (PIGSGLGSSAC) serves as a coordination point for ATP.

This sequence belongs to the GHMP kinase family. Homoserine kinase subfamily.

Its subcellular location is the cytoplasm. It carries out the reaction L-homoserine + ATP = O-phospho-L-homoserine + ADP + H(+). Its pathway is amino-acid biosynthesis; L-threonine biosynthesis; L-threonine from L-aspartate: step 4/5. Functionally, catalyzes the ATP-dependent phosphorylation of L-homoserine to L-homoserine phosphate. This chain is Homoserine kinase, found in Salmonella agona (strain SL483).